Consider the following 311-residue polypeptide: tRNA dimethylallyltransferase (311 aa).

An ATP-binding site is contributed by Gly12–Thr19. Thr14–Thr19 is a substrate binding site. Interaction with substrate tRNA regions lie at residues Asp37–Leu40, Gln161–Arg165, and Arg241–Arg246.

This sequence belongs to the IPP transferase family. Monomer. The cofactor is Mg(2+).

The enzyme catalyses adenosine(37) in tRNA + dimethylallyl diphosphate = N(6)-dimethylallyladenosine(37) in tRNA + diphosphate. Its function is as follows. Catalyzes the transfer of a dimethylallyl group onto the adenine at position 37 in tRNAs that read codons beginning with uridine, leading to the formation of N6-(dimethylallyl)adenosine (i(6)A). The polypeptide is tRNA dimethylallyltransferase (Histophilus somni (strain 129Pt) (Haemophilus somnus)).